An 806-amino-acid polypeptide reads, in one-letter code: 85/88 kDa calcium-independent phospholipase A2 (806 aa).

9 ANK repeats span residues 120–147, 151–181, 185–215, 219–248, 251–281, 286–312, 316–345, 349–378, and 382–403; these read WSVA…ANCA, EGCT…QMDV, KGET…GLNQ, QGLT…RCNI, PNGY…QIHS, YGAS…NVNS, AGNT…NADA, HGNT…EVDT, and FGET…KAIL. 2 helical membrane passes run 480 to 500 and 511 to 531; these read LLCL…LIAI and LFDW…ILHS. The PNPLA domain maps to 481–665; that stretch reads LCLDGGGVKG…LANNPTLDAM (185 aa). The short motif at 485–490 is the GXGXXG element; the sequence is GGGVKG. The short motif at 517–521 is the GXSXG element; that stretch reads GTSTG. Serine 519 acts as the Nucleophile in catalysis. The active-site Proton acceptor is the aspartate 652. Positions 652–654 match the DGA/G motif; it reads DGG. The tract at residues 677-686 is calmodulin-binding (1-9-14 motif); the sequence is RKGQANKVKK. The calmodulin-binding (IQ motif) stretch occupies residues 748–759; it reads AWCEMVGIQYFR.

In terms of assembly, homodimer formed by catalytic domains tightly interacting through a large hydrophobic interface. The contact area involves 3 alpha helices, several loops and a part of the beta sheet from each monomer. Both active sites of the dimer are in close proximity adopting an open conformation that provide sufficient space for phospholipid access and favoring cooperativity in deacylation-reacylation reactions. Each monomer has 9 ankyrin repeats stacked side-by-side in an elongated structure oriented outwards from the catalytic core. In terms of tissue distribution, four different transcripts were found to be expressed in a distinct tissue distribution.

Its subcellular location is the cytoplasm. The protein resides in the cell membrane. The protein localises to the mitochondrion. It is found in the cell projection. It localises to the pseudopodium. It carries out the reaction a 1,2-diacyl-sn-glycero-3-phosphocholine + H2O = a 1-acyl-sn-glycero-3-phosphocholine + a fatty acid + H(+). The enzyme catalyses a 1-O-alkyl-2-acyl-sn-glycero-3-phosphocholine + H2O = a 1-O-alkyl-sn-glycero-3-phosphocholine + a fatty acid + H(+). The catalysed reaction is 1,2-dihexadecanoyl-sn-glycero-3-phosphocholine + H2O = 1-hexadecanoyl-sn-glycero-3-phosphocholine + hexadecanoate + H(+). It catalyses the reaction 1-hexadecanoyl-2-(9Z-octadecenoyl)-sn-glycero-3-phosphocholine + H2O = 1-hexadecanoyl-sn-glycero-3-phosphocholine + (9Z)-octadecenoate + H(+). It carries out the reaction 1-hexadecanoyl-2-(9Z,12Z-octadecadienoyl)-sn-glycero-3-phosphocholine + H2O = (9Z,12Z)-octadecadienoate + 1-hexadecanoyl-sn-glycero-3-phosphocholine + H(+). The enzyme catalyses 1-hexadecanoyl-2-(5Z,8Z,11Z,14Z-eicosatetraenoyl)-sn-glycero-3-phosphocholine + H2O = 1-hexadecanoyl-sn-glycero-3-phosphocholine + (5Z,8Z,11Z,14Z)-eicosatetraenoate + H(+). The catalysed reaction is 1-octadecanoyl-2-(5Z,8Z,11Z,14Z-eicosatetraenoyl)-sn-glycero-3-phosphocholine + H2O = 1-octadecanoyl-sn-glycero-3-phosphocholine + (5Z,8Z,11Z,14Z)-eicosatetraenoate + H(+). It catalyses the reaction 1-hexadecanoyl-2-(5Z,8Z,11Z,14Z-eicosatetraenoyl)-sn-glycero-3-phosphoethanolamine + H2O = 1-hexadecanoyl-sn-glycero-3-phosphoethanolamine + (5Z,8Z,11Z,14Z)-eicosatetraenoate + H(+). It carries out the reaction 1,2-dihexadecanoyl-sn-glycero-3-phosphate + H2O = 1-hexadecanoyl-sn-glycero-3-phosphate + hexadecanoate + H(+). The enzyme catalyses a 1-acyl-sn-glycero-3-phosphocholine + H2O = sn-glycerol 3-phosphocholine + a fatty acid + H(+). The catalysed reaction is 1-hexadecanoyl-sn-glycero-3-phosphocholine + H2O = sn-glycerol 3-phosphocholine + hexadecanoate + H(+). It catalyses the reaction 1-(5Z,8Z,11Z,14Z-eicosatetraenoyl)-sn-glycero-3-phosphocholine + H2O = sn-glycerol 3-phosphocholine + (5Z,8Z,11Z,14Z)-eicosatetraenoate + H(+). It carries out the reaction 2-(5Z,8Z,11Z,14Z)-eicosatetraenoyl-sn-glycero-3-phosphocholine + H2O = sn-glycerol 3-phosphocholine + (5Z,8Z,11Z,14Z)-eicosatetraenoate + H(+). The enzyme catalyses 1-O-hexadecyl-2-(5Z,8Z,11Z,14Z)-eicosatetraenoyl-sn-glycero-3-phosphocholine + H2O = 1-O-hexadecyl-sn-glycero-3-phosphocholine + (5Z,8Z,11Z,14Z)-eicosatetraenoate + H(+). The catalysed reaction is 1-O-hexadecyl-2-acetyl-sn-glycero-3-phosphocholine + H2O = 1-O-hexadecyl-sn-glycero-3-phosphocholine + acetate + H(+). It catalyses the reaction hexadecanoyl-CoA + H2O = hexadecanoate + CoA + H(+). It carries out the reaction 1',3'-bis[1,2-di-(9Z-octadecenoyl)-sn-glycero-3-phospho]-glycerol + H2O = 1'-[1,2-di-(9Z-octadecenoyl)-sn-glycero-3-phospho]-3'-[1-(9Z-octadecenoyl)-sn-glycero-3-phospho]-glycerol + (9Z)-octadecenoate + H(+). The enzyme catalyses 1'-[1,2-di-(9Z-octadecenoyl)-sn-glycero-3-phospho]-3'-[1-(9Z-octadecenoyl)-sn-glycero-3-phospho]-glycerol + H2O = 1',3'-bis-[1-(9Z-octadecenoyl)-sn-glycero-3-phospho]-glycerol + (9Z)-octadecenoate + H(+). The catalysed reaction is 1',3'-bis-[1,2-di-(9Z,12Z-octadecadienoyl)-sn-glycero-3-phospho]-glycerol + H2O = 1'-[1,2-di-(9Z,12Z-octadecadienoyl)-sn-glycero-3-phospho]-3'-[1-(9Z,12Z-octadecadienoyl)-sn-glycero-3-phospho]-glycerol + (9Z,12Z)-octadecadienoate + H(+). It catalyses the reaction 1-octadecanoyl-2-(15-hydroxy-(5Z,8Z,11Z,13E)-eicosatetraenoyl)-sn-glycero-3-phosphoethanolamine + H2O = 1-octadecanoyl-sn-glycero-3-phosphoethanolamine + 15-hydroxy-(5Z,8Z,11Z,13E)-eicosatetraenoate + H(+). Its activity is regulated as follows. Activated by ATP. Inhibited by calcium-activated calmodulin. Inhibited by bromoenol lactone (BEL). Functionally, calcium-independent phospholipase involved in phospholipid remodeling with implications in cellular membrane homeostasis, mitochondrial integrity and signal transduction. Hydrolyzes the ester bond of the fatty acyl group attached at sn-1 or sn-2 position of phospholipids (phospholipase A1 and A2 activity respectively), producing lysophospholipids that are used in deacylation-reacylation cycles. Hydrolyzes both saturated and unsaturated long fatty acyl chains in various glycerophospholipid classes such as phosphatidylcholines, phosphatidylethanolamines and phosphatidates, with a preference for hydrolysis at sn-2 position. Can further hydrolyze lysophospholipids carrying saturated fatty acyl chains (lysophospholipase activity). Upon oxidative stress, contributes to remodeling of mitochondrial phospholipids in pancreatic beta cells, in a repair mechanism to reduce oxidized lipid content. Preferentially hydrolyzes oxidized polyunsaturated fatty acyl chains from cardiolipins, yielding monolysocardiolipins that can be reacylated with unoxidized fatty acyls to regenerate native cardiolipin species. Hydrolyzes oxidized glycerophosphoethanolamines present in pancreatic islets, releasing oxidized polyunsaturated fatty acids such as hydroxyeicosatetraenoates (HETEs). Has thioesterase activity toward fatty-acyl CoA releasing CoA-SH known to facilitate fatty acid transport and beta-oxidation in mitochondria particularly in skeletal muscle. Plays a role in regulation of membrane dynamics and homeostasis. Selectively hydrolyzes sn-2 arachidonoyl group in plasmalogen phospholipids, structural components of lipid rafts and myelin. Regulates F-actin polymerization at the pseudopods, which is required for both speed and directionality of MCP1/CCL2-induced monocyte chemotaxis. Targets membrane phospholipids to produce potent lipid signaling messengers. Generates lysophosphatidate (LPA, 1-acyl-glycerol-3-phosphate), which acts via G-protein receptors in various cell types. Has phospholipase A2 activity toward platelet-activating factor (PAF, 1-O-alkyl-2-acetyl-sn-glycero-3-phosphocholine), likely playing a role in inactivation of this potent pro-inflammatory signaling lipid. In response to glucose, amplifies calcium influx in pancreatic beta cells to promote INS secretion. Its function is as follows. Lacks the catalytic domain and may act as a negative regulator of the catalytically active isoforms. In Homo sapiens (Human), this protein is 85/88 kDa calcium-independent phospholipase A2 (PLA2G6).